The sequence spans 501 residues: Glycerol kinase (501 aa).

ADP is bound at residue Thr-12. ATP contacts are provided by Thr-12, Thr-13, and Ser-14. Thr-12 contacts sn-glycerol 3-phosphate. Position 16 (Arg-16) interacts with ADP. Residues Arg-82, Glu-83, Tyr-134, and Asp-244 each coordinate sn-glycerol 3-phosphate. The glycerol site is built by Arg-82, Glu-83, Tyr-134, Asp-244, and Gln-245. Thr-266 and Gly-310 together coordinate ADP. ATP contacts are provided by Thr-266, Gly-310, Gln-314, and Gly-411. 2 residues coordinate ADP: Gly-411 and Asn-415.

This sequence belongs to the FGGY kinase family.

It catalyses the reaction glycerol + ATP = sn-glycerol 3-phosphate + ADP + H(+). It functions in the pathway polyol metabolism; glycerol degradation via glycerol kinase pathway; sn-glycerol 3-phosphate from glycerol: step 1/1. Its activity is regulated as follows. Inhibited by fructose 1,6-bisphosphate (FBP). Key enzyme in the regulation of glycerol uptake and metabolism. Catalyzes the phosphorylation of glycerol to yield sn-glycerol 3-phosphate. The protein is Glycerol kinase of Methylorubrum extorquens (strain PA1) (Methylobacterium extorquens).